We begin with the raw amino-acid sequence, 177 residues long: Transcriptional regulator MET31 (177 aa).

The C2H2-type zinc-finger motif lies at 95–117; sequence YSCAKCQLKFSRSSDLRRHEKVH.

In terms of assembly, interacts with MET4 and MET28.

The protein resides in the cytoplasm. The protein localises to the nucleus. In terms of biological role, auxiliary transcriptional regulator of sulfur amino acid metabolism. Involved in the transcriptional activation of MET28. This Saccharomyces cerevisiae (strain ATCC 204508 / S288c) (Baker's yeast) protein is Transcriptional regulator MET31 (MET31).